A 198-amino-acid polypeptide reads, in one-letter code: MQYPEPIAKLIEGFMRLPGIGPKTASRLAFFVLEMKEDDVLDFAKALVNVKRKLTYCSVCHNITDTDPCRICEDSKRDESVICVVQDAKDVIAMEKMKEYHGKYHVLHGAISPMDGIGPEDIKIPELIKRLQDDTIQEVIVATNPTIEGEATAMYISRLVKPTGIKVTRIAHGLPVGGDLEYADEVTLSKAMEGRREL.

The C4-type zinc-finger motif lies at 57–72 (CSVCHNITDTDPCRIC). Residues 80–175 (SVICVVQDAK…KVTRIAHGLP (96 aa)) form the Toprim domain.

It belongs to the RecR family.

Functionally, may play a role in DNA repair. It seems to be involved in an RecBC-independent recombinational process of DNA repair. It may act with RecF and RecO. This chain is Recombination protein RecR, found in Halalkalibacterium halodurans (strain ATCC BAA-125 / DSM 18197 / FERM 7344 / JCM 9153 / C-125) (Bacillus halodurans).